Here is a 400-residue protein sequence, read N- to C-terminus: Glycerol-3-phosphate dehydrogenase [NAD(+)] 1 (400 aa).

Residues 50–55, Phe138, Lys161, and Ala194 each bind NAD(+); that span reads GSGNWG. Residue Lys161 participates in substrate binding. The active-site Proton acceptor is the Lys254. 2 residues coordinate NAD(+): Arg319 and Gln348. 319–320 is a substrate binding site; the sequence is RN.

It belongs to the NAD-dependent glycerol-3-phosphate dehydrogenase family.

The catalysed reaction is sn-glycerol 3-phosphate + NAD(+) = dihydroxyacetone phosphate + NADH + H(+). The polypeptide is Glycerol-3-phosphate dehydrogenase [NAD(+)] 1 (GPD1) (Candida glabrata (strain ATCC 2001 / BCRC 20586 / JCM 3761 / NBRC 0622 / NRRL Y-65 / CBS 138) (Yeast)).